A 171-amino-acid chain; its full sequence is Inosine/xanthosine triphosphatase (171 aa).

Residue 8 to 13 (TTNPAK) coordinates substrate. Mg(2+) contacts are provided by Glu-38 and Gln-68.

This sequence belongs to the YjjX NTPase family. In terms of assembly, homodimer. It depends on Mg(2+) as a cofactor. Mn(2+) is required as a cofactor.

The catalysed reaction is XTP + H2O = XDP + phosphate + H(+). The enzyme catalyses ITP + H2O = IDP + phosphate + H(+). In terms of biological role, phosphatase that hydrolyzes non-canonical purine nucleotides such as XTP and ITP to their respective diphosphate derivatives. Probably excludes non-canonical purines from DNA/RNA precursor pool, thus preventing their incorporation into DNA/RNA and avoiding chromosomal lesions. The chain is Inosine/xanthosine triphosphatase from Citrobacter koseri (strain ATCC BAA-895 / CDC 4225-83 / SGSC4696).